The following is a 353-amino-acid chain: UDP-N-acetylglucosamine--N-acetylmuramyl-(pentapeptide) pyrophosphoryl-undecaprenol N-acetylglucosamine transferase (353 aa).

Residues 15–17 (TGG), Asn-125, Arg-165, Ser-186, and Gln-286 each bind UDP-N-acetyl-alpha-D-glucosamine.

Belongs to the glycosyltransferase 28 family. MurG subfamily.

Its subcellular location is the cell inner membrane. The enzyme catalyses di-trans,octa-cis-undecaprenyl diphospho-N-acetyl-alpha-D-muramoyl-L-alanyl-D-glutamyl-meso-2,6-diaminopimeloyl-D-alanyl-D-alanine + UDP-N-acetyl-alpha-D-glucosamine = di-trans,octa-cis-undecaprenyl diphospho-[N-acetyl-alpha-D-glucosaminyl-(1-&gt;4)]-N-acetyl-alpha-D-muramoyl-L-alanyl-D-glutamyl-meso-2,6-diaminopimeloyl-D-alanyl-D-alanine + UDP + H(+). It participates in cell wall biogenesis; peptidoglycan biosynthesis. Cell wall formation. Catalyzes the transfer of a GlcNAc subunit on undecaprenyl-pyrophosphoryl-MurNAc-pentapeptide (lipid intermediate I) to form undecaprenyl-pyrophosphoryl-MurNAc-(pentapeptide)GlcNAc (lipid intermediate II). The sequence is that of UDP-N-acetylglucosamine--N-acetylmuramyl-(pentapeptide) pyrophosphoryl-undecaprenol N-acetylglucosamine transferase from Chlamydia muridarum (strain MoPn / Nigg).